Reading from the N-terminus, the 484-residue chain is MKLIVKVFPEITIKSRPVRKRFIRQLGKNIRNVLKDLDPELAVDGVWDNLEVVTRVEDEKVQREMIERLTCTPGITHFLQVEEYPLGDFDDIVAKCKHHFGHLLAGKHFAVRCKRGGHHDFTSMDVDRYVGSQLRQQCGAAGIELKKPEVLVRIEIRDQRLYVIHNQHNGIGGYPLGALEQTLVLMSGGFDSTVAAYQMMRRGLMTHFCFFNLGGRAHELGVMEVAHYLWKKYGSSQRVLFISVPFEEVVGEILNKVDNSYMGVTLKRMMLRGAAHMADRLQIDALVTGEAISQVSSQTLPNLSIIDSATDKLVLRPLLASHKQDIIDQATEIGTADFAKHMPEYCGVISVNPTTHAKRHRMEHEEKQFDMAVLERALERAKFISIDHVIDELGKDIEIEEVAEALPGQIVIDIRHPDAQEDEPLVLEGIEVQAMPFYAINSKFKHLDPTRQYLLYCDKGVMSRLHAHHLLSEGHANVRVYRPT.

The region spanning 63 to 167 (REMIERLTCT…DQRLYVIHNQ (105 aa)) is the THUMP domain. ATP-binding positions include 185-186 (LM), Lys-267, Gly-289, and Gln-298. Cys-346 and Cys-457 are disulfide-bonded. A Rhodanese domain is found at 405-483 (ALPGQIVIDI…GHANVRVYRP (79 aa)). Cys-457 serves as the catalytic Cysteine persulfide intermediate.

This sequence belongs to the ThiI family.

Its subcellular location is the cytoplasm. It catalyses the reaction [ThiI sulfur-carrier protein]-S-sulfanyl-L-cysteine + a uridine in tRNA + 2 reduced [2Fe-2S]-[ferredoxin] + ATP + H(+) = [ThiI sulfur-carrier protein]-L-cysteine + a 4-thiouridine in tRNA + 2 oxidized [2Fe-2S]-[ferredoxin] + AMP + diphosphate. The catalysed reaction is [ThiS sulfur-carrier protein]-C-terminal Gly-Gly-AMP + S-sulfanyl-L-cysteinyl-[cysteine desulfurase] + AH2 = [ThiS sulfur-carrier protein]-C-terminal-Gly-aminoethanethioate + L-cysteinyl-[cysteine desulfurase] + A + AMP + 2 H(+). Its pathway is cofactor biosynthesis; thiamine diphosphate biosynthesis. In terms of biological role, catalyzes the ATP-dependent transfer of a sulfur to tRNA to produce 4-thiouridine in position 8 of tRNAs, which functions as a near-UV photosensor. Also catalyzes the transfer of sulfur to the sulfur carrier protein ThiS, forming ThiS-thiocarboxylate. This is a step in the synthesis of thiazole, in the thiamine biosynthesis pathway. The sulfur is donated as persulfide by IscS. The polypeptide is tRNA sulfurtransferase (Pseudomonas putida (strain ATCC 47054 / DSM 6125 / CFBP 8728 / NCIMB 11950 / KT2440)).